Consider the following 390-residue polypeptide: Succinate--CoA ligase [ADP-forming] subunit beta (390 aa).

The ATP-grasp domain maps to 9 to 248 (KEILRRHKAN…ITEEDPLEVQ (240 aa)). ATP-binding positions include Lys-50, 57 to 59 (GRG), Glu-103, Ile-106, and Glu-111. Positions 203 and 217 each coordinate Mg(2+). Substrate contacts are provided by residues Asn-268 and 325–327 (GIV).

It belongs to the succinate/malate CoA ligase beta subunit family. In terms of assembly, heterotetramer of two alpha and two beta subunits. Mg(2+) is required as a cofactor.

It catalyses the reaction succinate + ATP + CoA = succinyl-CoA + ADP + phosphate. It carries out the reaction GTP + succinate + CoA = succinyl-CoA + GDP + phosphate. The protein operates within carbohydrate metabolism; tricarboxylic acid cycle; succinate from succinyl-CoA (ligase route): step 1/1. Its function is as follows. Succinyl-CoA synthetase functions in the citric acid cycle (TCA), coupling the hydrolysis of succinyl-CoA to the synthesis of either ATP or GTP and thus represents the only step of substrate-level phosphorylation in the TCA. The beta subunit provides nucleotide specificity of the enzyme and binds the substrate succinate, while the binding sites for coenzyme A and phosphate are found in the alpha subunit. This chain is Succinate--CoA ligase [ADP-forming] subunit beta, found in Leptospira borgpetersenii serovar Hardjo-bovis (strain JB197).